We begin with the raw amino-acid sequence, 368 residues long: Flagellar P-ring protein (368 aa).

The first 24 residues, 1 to 24 (MTLTRPLALISALAALILALPADA), serve as a signal peptide directing secretion.

Belongs to the FlgI family. As to quaternary structure, the basal body constitutes a major portion of the flagellar organelle and consists of four rings (L,P,S, and M) mounted on a central rod.

Its subcellular location is the periplasm. The protein localises to the bacterial flagellum basal body. Its function is as follows. Assembles around the rod to form the L-ring and probably protects the motor/basal body from shearing forces during rotation. The polypeptide is Flagellar P-ring protein (Methylobacillus flagellatus (strain ATCC 51484 / DSM 6875 / VKM B-1610 / KT)).